The primary structure comprises 404 residues: Demethylphylloquinone reductase NdbB (404 aa).

FAD is bound at residue 7 to 43 (RICILGGGFGGLYTALRLGQLSWEGHTPPEIVLVDQR). Residue 159-195 (IRIAIVGGGYSGVELAAKLGDRLGERGRIRIIERGKE) coordinates NADP(+).

It belongs to the NADH dehydrogenase family. It depends on FAD as a cofactor.

It catalyses the reaction demethylphylloquinone + NADPH + H(+) = demethylphylloquinol + NADP(+). The protein operates within cofactor biosynthesis; phylloquinone biosynthesis. With respect to regulation, inhibited by dicumarol. In terms of biological role, bifunctional oxidoreductase probably ables to act both on prenyl naphthoquinones and on prenyl benzoquinones. Catalyzes the penultimate step in the biosynthesis of vitamin K1. This Synechocystis sp. (strain ATCC 27184 / PCC 6803 / Kazusa) protein is Demethylphylloquinone reductase NdbB.